Reading from the N-terminus, the 507-residue chain is Cobyric acid synthase (507 aa).

A GATase cobBQ-type domain is found at 249–451 (DIEIAVINLP…IHGIFENREF (203 aa)). Cys330 (nucleophile) is an active-site residue. His443 is an active-site residue.

Belongs to the CobB/CobQ family. CobQ subfamily.

It functions in the pathway cofactor biosynthesis; adenosylcobalamin biosynthesis. Its function is as follows. Catalyzes amidations at positions B, D, E, and G on adenosylcobyrinic A,C-diamide. NH(2) groups are provided by glutamine, and one molecule of ATP is hydrogenolyzed for each amidation. The protein is Cobyric acid synthase of Thermoanaerobacter sp. (strain X514).